Here is a 1601-residue protein sequence, read N- to C-terminus: Rap guanine nucleotide exchange factor 6 (1601 aa).

Met-1 is modified (N-acetylmethionine). Disordered stretches follow at residues 1–22 (MNSP…ERTP) and 179–250 (PHPQ…QGRD). Ser-3 carries the phosphoserine modification. Low complexity predominate over residues 187–205 (SSSQSGCSIASDSGSSSLS). A compositionally biased stretch (acidic residues) spans 228 to 241 (VDSEDDEEEDEEID). Residue 280-399 (AFANMTMSVR…VEEEGEIVMV (120 aa)) coordinates a nucleoside 3',5'-cyclic phosphate. Residues 412–526 (KGHIVIKATP…LLNIACAAKA (115 aa)) form the N-terminal Ras-GEF domain. One can recognise a PDZ domain in the interval 530–615 (QVVLQKASRE…LTVKTNIFVF (86 aa)). The region spanning 749–835 (PDQVIRVFKV…GRYYLKNNME (87 aa)) is the Ras-associating domain. The Ras-GEF domain occupies 860-1088 (STIEVATQLS…LDVQGGAHKK (229 aa)). Disordered stretches follow at residues 1192–1274 (IRKK…SRSS), 1302–1324 (ESTG…QHGP), 1455–1478 (LEST…VYKT), and 1571–1601 (QRHN…VSAV). Low complexity-rich tracts occupy residues 1229-1238 (SVASSLHSSP) and 1255-1274 (SAKS…SRSS). Positions 1586–1601 (TDADSEADENEQVSAV) are enriched in acidic residues.

Interacts with the second PDZ domain of human PTP1e. As to expression, isoform 3 has highest expression levels in the brain, heart, liver, lung and placenta and is barely detectable in skeletal muscle, kidney and pancreas.

The protein resides in the cytoplasm. Its subcellular location is the cell membrane. Guanine nucleotide exchange factor (GEF) for Rap1A, Rap2A and M-Ras GTPases. Does not interact with cAMP. This chain is Rap guanine nucleotide exchange factor 6 (RAPGEF6), found in Homo sapiens (Human).